We begin with the raw amino-acid sequence, 296 residues long: Phosphatidylglycerol--prolipoprotein diacylglyceryl transferase (296 aa).

Transmembrane regions (helical) follow at residues 17-37 (LAVR…IVVG), 59-79 (MMFY…VLFY), and 97-117 (GGMS…LFAW). Arg-142 lines the a 1,2-diacyl-sn-glycero-3-phospho-(1'-sn-glycerol) pocket. 2 helical membrane-spanning segments follow: residues 230 to 250 (MGAV…TVEF) and 257 to 277 (FLGL…PMIL).

It belongs to the Lgt family.

It is found in the cell inner membrane. It catalyses the reaction L-cysteinyl-[prolipoprotein] + a 1,2-diacyl-sn-glycero-3-phospho-(1'-sn-glycerol) = an S-1,2-diacyl-sn-glyceryl-L-cysteinyl-[prolipoprotein] + sn-glycerol 1-phosphate + H(+). Its pathway is protein modification; lipoprotein biosynthesis (diacylglyceryl transfer). Functionally, catalyzes the transfer of the diacylglyceryl group from phosphatidylglycerol to the sulfhydryl group of the N-terminal cysteine of a prolipoprotein, the first step in the formation of mature lipoproteins. This Burkholderia lata (strain ATCC 17760 / DSM 23089 / LMG 22485 / NCIMB 9086 / R18194 / 383) protein is Phosphatidylglycerol--prolipoprotein diacylglyceryl transferase.